The sequence spans 110 residues: Integration host factor subunit beta (110 aa).

Belongs to the bacterial histone-like protein family. In terms of assembly, heterodimer of an alpha and a beta chain.

In terms of biological role, this protein is one of the two subunits of integration host factor, a specific DNA-binding protein that functions in genetic recombination as well as in transcriptional and translational control. In Parvibaculum lavamentivorans (strain DS-1 / DSM 13023 / NCIMB 13966), this protein is Integration host factor subunit beta.